We begin with the raw amino-acid sequence, 450 residues long: Phosphoglucosamine mutase (450 aa).

The active-site Phosphoserine intermediate is the S100. 4 residues coordinate Mg(2+): S100, D240, D242, and D244. S100 carries the post-translational modification Phosphoserine.

It belongs to the phosphohexose mutase family. The cofactor is Mg(2+). In terms of processing, activated by phosphorylation.

The catalysed reaction is alpha-D-glucosamine 1-phosphate = D-glucosamine 6-phosphate. Its function is as follows. Catalyzes the conversion of glucosamine-6-phosphate to glucosamine-1-phosphate. The protein is Phosphoglucosamine mutase of Desulforudis audaxviator (strain MP104C).